A 1423-amino-acid chain; its full sequence is Protein phosphatase Slingshot homolog 2 (1423 aa).

Positions 1–37 are disordered; sequence MALVTVQRSPTPSTTSSPCASEADSGEEECRSQPRSI. Residues 9-18 show a composition bias toward low complexity; the sequence is SPTPSTTSSP. Phosphoserine occurs at positions 17, 25, and 36. In terms of domain architecture, DEK-C spans 248–303; the sequence is ERTERLIKTKLREIMMQKDLENITSKEIRTELEMQMVCNLREFKEFIDNEMIVILG. Residues 307-448 form the Tyrosine-protein phosphatase domain; sequence SPTQIFEHVF…LEEYQGILLA (142 aa). The active-site Phosphocysteine intermediate is C392. S461, S487, S534, S631, and S633 each carry phosphoserine. Disordered stretches follow at residues 617–641, 664–684, 696–728, 797–825, 840–862, 877–954, 962–981, 1019–1041, 1070–1108, and 1144–1179; these read TSPL…CQTE, QETR…GGRN, PSKV…QSKA, ENKP…MCNP, EGEP…AKWY, LRQE…NATV, FDHL…TQQE, TSPN…EQGL, SLHP…SSLS, and TEQS…YKDS. Residues 621 to 635 show a composition bias toward pro residues; the sequence is KDPPMSPDPESPSPQ. A compositionally biased stretch (basic and acidic residues) spans 664-680; that stretch reads QETRSRSFSHSRMEELG. Over residues 889–904 the composition is skewed to polar residues; sequence TCTSLSTRKNSKNDSS. A compositionally biased stretch (basic and acidic residues) spans 910–932; it reads PKGKSDEAPPEHSFVLKEPEMSK. Polar residues predominate over residues 941–953; sequence EAGSLSHSEQNAT. Positions 1019 to 1034 are enriched in polar residues; sequence TSPNHTGPGSEIATSE. Residues 1144–1172 are compositionally biased toward polar residues; that stretch reads TEQSSTTDEPSAEQVSWEESQESPLSSGS. S1217 carries the post-translational modification Phosphoserine. Position 1422 is a phosphothreonine (T1422).

Belongs to the protein-tyrosine phosphatase family. Interacts with filamentous actin.

It localises to the cytoplasm. It is found in the cytoskeleton. The protein resides in the cell junction. Its subcellular location is the focal adhesion. The protein localises to the cytoplasmic vesicle. It localises to the secretory vesicle. It is found in the acrosome. It carries out the reaction O-phospho-L-tyrosyl-[protein] + H2O = L-tyrosyl-[protein] + phosphate. It catalyses the reaction O-phospho-L-seryl-[protein] + H2O = L-seryl-[protein] + phosphate. The enzyme catalyses O-phospho-L-threonyl-[protein] + H2O = L-threonyl-[protein] + phosphate. Its function is as follows. Protein phosphatase which regulates actin filament dynamics. Dephosphorylates and activates the actin binding/depolymerizing factor cofilin, which subsequently binds to actin filaments and stimulates their disassembly. Inhibitory phosphorylation of cofilin is mediated by LIMK1, which may also be dephosphorylated and inactivated by this protein. Required for spermatogenesis. Involved in acrosome biogenesis, probably by regulating cofilin-mediated actin cytoskeleton remodeling during proacrosomal vesicle fusion and/or Golgi to perinuclear vesicle trafficking. The chain is Protein phosphatase Slingshot homolog 2 (SSH2) from Homo sapiens (Human).